Here is a 349-residue protein sequence, read N- to C-terminus: GDSL esterase/lipase At2g19060 (349 aa).

The N-terminal stretch at methionine 1–glycine 25 is a signal peptide. Serine 37 functions as the Nucleophile in the catalytic mechanism. A glycan (N-linked (GlcNAc...) asparagine) is linked at asparagine 178. Residues aspartate 317 and histidine 320 contribute to the active site.

It belongs to the 'GDSL' lipolytic enzyme family.

It is found in the secreted. This is GDSL esterase/lipase At2g19060 from Arabidopsis thaliana (Mouse-ear cress).